A 126-amino-acid chain; its full sequence is Small ribosomal subunit protein uS13 (126 aa).

Residues 96–126 (PVRGQRTRTNARTRRGSRRTVAGKKKPAAKK) are disordered. Positions 100-126 (QRTRTNARTRRGSRRTVAGKKKPAAKK) are enriched in basic residues.

The protein belongs to the universal ribosomal protein uS13 family. In terms of assembly, part of the 30S ribosomal subunit. Forms a loose heterodimer with protein S19. Forms two bridges to the 50S subunit in the 70S ribosome.

Located at the top of the head of the 30S subunit, it contacts several helices of the 16S rRNA. In the 70S ribosome it contacts the 23S rRNA (bridge B1a) and protein L5 of the 50S subunit (bridge B1b), connecting the 2 subunits; these bridges are implicated in subunit movement. Contacts the tRNAs in the A and P-sites. This chain is Small ribosomal subunit protein uS13, found in Thermosynechococcus vestitus (strain NIES-2133 / IAM M-273 / BP-1).